Here is a 123-residue protein sequence, read N- to C-terminus: Large ribosomal subunit protein uL14 (123 aa).

Belongs to the universal ribosomal protein uL14 family. As to quaternary structure, part of the 50S ribosomal subunit. Forms a cluster with proteins L3 and L19. In the 70S ribosome, L14 and L19 interact and together make contacts with the 16S rRNA in bridges B5 and B8.

Functionally, binds to 23S rRNA. Forms part of two intersubunit bridges in the 70S ribosome. The sequence is that of Large ribosomal subunit protein uL14 from Chromohalobacter salexigens (strain ATCC BAA-138 / DSM 3043 / CIP 106854 / NCIMB 13768 / 1H11).